The chain runs to 1043 residues: Calcium-transporting ATPase 1, plasma membrane-type (1043 aa).

Topologically, residues 1-178 (MSFIRKKSME…FLWDASQDMT (178 aa)) are cytoplasmic. The next 2 membrane-spanning stretches (helical) occupy residues 179–199 (LLLL…TEGW) and 202–222 (GMYD…ITAA). At 223–258 (SDYKQSLQFRDLDKEKKKIDVQVTRDGYRQKVSIYD) the chain is on the cytoplasmic side. Transmembrane regions (helical) follow at residues 259–279 (IVVG…DGLF) and 356–376 (VATI…TVLM). The Cytoplasmic portion of the chain corresponds to 377–395 (ARFLLGKAGAPGGLLRWRM). A helical transmembrane segment spans residues 396-416 (VDALAVLNFFAVAVTIIVVAV). D460 serves as the catalytic 4-aspartylphosphate intermediate. 2 residues coordinate Mg(2+): D761 and D765. Residues 824 to 844 (LTVNVVALMVNFISASFTGSA) traverse the membrane as a helical segment. Residue P845 is a topological domain, cytoplasmic. 2 consecutive transmembrane segments (helical) span residues 846-866 (LTIV…ALAL) and 891-911 (VMWR…GVLL). The Cytoplasmic segment spans residues 912–955 (LRGKSLLQINGPQADSLLNTFVFNTFVFCQVFNEVNSREMEKIN). A run of 2 helical transmembrane segments spans residues 956-976 (VFSG…TAGF) and 998-1018 (WLTS…LKCI). Residues 1019 to 1043 (PVESGSDASDRHDGYRPIPTGPSAV) lie on the Cytoplasmic side of the membrane. The segment at 1023–1043 (GSDASDRHDGYRPIPTGPSAV) is disordered.

The protein belongs to the cation transport ATPase (P-type) (TC 3.A.3) family. Type IIB subfamily.

The protein localises to the membrane. It carries out the reaction Ca(2+)(in) + ATP + H2O = Ca(2+)(out) + ADP + phosphate + H(+). Activated by calmodulin. Its function is as follows. This magnesium-dependent enzyme catalyzes the hydrolysis of ATP coupled with the translocation of calcium from the cytosol out of the cell, into the endoplasmic reticulum, or into organelles. The polypeptide is Calcium-transporting ATPase 1, plasma membrane-type (Oryza sativa subsp. japonica (Rice)).